The primary structure comprises 317 residues: HTH-type transcriptional regulator MetR (317 aa).

The HTH lysR-type domain maps to 1-59 (MIEVKHLKTLQALRNCGSLAAAAATLHQTQSALSHQFSDLEQRLGFRLFVRKSQPLRFT). Positions 19–38 (LAAAAATLHQTQSALSHQFS) form a DNA-binding region, H-T-H motif.

This sequence belongs to the LysR transcriptional regulatory family.

It localises to the cytoplasm. Functionally, control of the last step in methionine biosynthesis; MetR is a positive activator of the metA, metE and metH genes. It is also a negative regulator of its own expression. The polypeptide is HTH-type transcriptional regulator MetR (metR) (Escherichia coli O157:H7).